Consider the following 687-residue polypeptide: Protein SDA1 homolog (687 aa).

3 disordered regions span residues serine 517–arginine 549, methionine 561–glycine 587, and threonine 615–isoleucine 687. Over residues glutamate 520–aspartate 537 the composition is skewed to acidic residues. The span at glutamate 644 to arginine 666 shows a compositional bias: basic residues. Residues serine 667–leucine 680 show a composition bias toward basic and acidic residues.

It belongs to the SDA1 family.

It localises to the nucleus. The protein resides in the nucleolus. Required for 60S pre-ribosomal subunits export to the cytoplasm. In Nematostella vectensis (Starlet sea anemone), this protein is Protein SDA1 homolog (sdad1).